The following is a 75-amino-acid chain: Putative DNA-directed RNA polymerase subunit omega (75 aa).

The protein belongs to the RNA polymerase subunit omega family.

The protein resides in the plastid. The protein localises to the chloroplast. The enzyme catalyses RNA(n) + a ribonucleoside 5'-triphosphate = RNA(n+1) + diphosphate. Functionally, may be involved in RNA polymerase activity. In Mesostigma viride (Green alga), this protein is Putative DNA-directed RNA polymerase subunit omega (rpoZ).